Consider the following 218-residue polypeptide: Ribose-5-phosphate isomerase A (218 aa).

Residues 28 to 31 (SGST), 81 to 84 (DGAD), and 94 to 97 (KGKG) contribute to the substrate site. Catalysis depends on Glu-103, which acts as the Proton acceptor. A substrate-binding site is contributed by Lys-121.

Belongs to the ribose 5-phosphate isomerase family. In terms of assembly, homodimer.

The enzyme catalyses aldehydo-D-ribose 5-phosphate = D-ribulose 5-phosphate. The protein operates within carbohydrate degradation; pentose phosphate pathway; D-ribose 5-phosphate from D-ribulose 5-phosphate (non-oxidative stage): step 1/1. Functionally, catalyzes the reversible conversion of ribose-5-phosphate to ribulose 5-phosphate. The protein is Ribose-5-phosphate isomerase A of Wigglesworthia glossinidia brevipalpis.